The primary structure comprises 65 residues: Kassorin-M (65 aa).

Residues 1-22 (MLTLKKSMLLLFFLGMVSFSLA) form the signal peptide. A propeptide spanning residues 23 to 51 (DDKREDEAEEGEDKRADEGEEKRAAEKKR) is cleaved from the precursor. The interval 24–45 (DKREDEAEEGEDKRADEGEEKR) is disordered. L64 carries the post-translational modification Leucine amide.

The protein belongs to the frog skin active peptide (FSAP) family. Brevinin subfamily. Expressed by the skin glands.

It is found in the secreted. Induces contraction of smooth muscle in isolated guinea pig urinary bladder (EC50=4.66 nM). Has no antimicrobial activity against the Gram-positive bacterium S.aureus, the Gram-negative bacterium E.coli and the yeast C.albicans. Elicits histamine release from rat peritoneal mast cells. The protein is Kassorin-M of Phlyctimantis maculatus (Red-legged running frog).